Reading from the N-terminus, the 456-residue chain is Equilibrative nucleoside transporter 1 (456 aa).

The Cytoplasmic portion of the chain corresponds to 2-12; the sequence is TTSHQPQDRYK. A helical transmembrane segment spans residues 13 to 29; that stretch reads AVWLIFFMLGLGTLLPW. Residues 30–82 lie on the Extracellular side of the membrane; it reads NFFMTATQYFTNRLDMSQNVSLVTAELSKDAQASAAPAAPLPERNSLSAIFNN. A glycan (N-linked (GlcNAc...) asparagine) is linked at Asn48. Residues 83–107 traverse the membrane as a helical segment; it reads VMTLCAMLPLLLFTYLNSFLHQRIP. The Cytoplasmic portion of the chain corresponds to 108–111; the sequence is QSVR. A helical transmembrane segment spans residues 112 to 130; the sequence is ILGSLVAILLVFLITAILV. Residues 131 to 138 are Extracellular-facing; the sequence is KVQLDALP. A helical transmembrane segment spans residues 139–157; it reads FFVITMIKIVLINSFGAIL. The Cytoplasmic portion of the chain corresponds to 158 to 174; the sequence is QGSLFGLAGLLPASYTA. The chain crosses the membrane as a helical span at residues 175 to 199; the sequence is PIMSGQGLAGFFASVAMICAIASGS. Residues 200-206 are Extracellular-facing; sequence ELSESAF. A helical membrane pass occupies residues 207-227; the sequence is GYFITACAVIILTIICYLGLP. The Cytoplasmic segment spans residues 228-291; that stretch reads RLEFYRYYQQ…IKAILKNISV (64 aa). Ser254, Ser269, and Ser273 each carry phosphoserine. The segment covering 254-266 has biased composition (basic and acidic residues); the sequence is SKGEEPRAGKEES. Residues 254-276 are disordered; the sequence is SKGEEPRAGKEESGVSVSNSQPT. The helical transmembrane segment at 292–311 threads the bilayer; that stretch reads LAFSVCFIFTITIGMFPAVT. The Extracellular portion of the chain corresponds to 312 to 323; sequence VEVKSSIAGSST. Residues 324–342 traverse the membrane as a helical segment; that stretch reads WERYFIPVSCFLTFNIFDW. Residues 343-359 lie on the Cytoplasmic side of the membrane; sequence LGRSLTAVFMWPGKDSR. The helical transmembrane segment at 360–378 threads the bilayer; it reads WLPSLVLARLVFVPLLLLC. The Extracellular segment spans residues 379-393; the sequence is NIKPRRYLTVVFEHD. The helical transmembrane segment at 394–413 threads the bilayer; sequence AWFIFFMAAFAFSNGYLASL. The Cytoplasmic segment spans residues 414–431; it reads CMCFGPKKVKPAEAETAG. The helical transmembrane segment at 432–452 threads the bilayer; it reads AIMAFFLCLGLALGAVFSFLF. At 453 to 456 the chain is on the extracellular side; sequence RAIV.

This sequence belongs to the SLC29A/ENT transporter (TC 2.A.57) family. In terms of assembly, identified in a complex with STOM. In terms of processing, glycosylated. As to expression, expressed in testis at the blood-testis barrier (at protein level). Detected in erythrocytes (at protein level). Expressed at relatively high levels in cerebral cortex, particularly the frontal and parietal lobes, and the thalamus and basal ganglia (at protein level). In the midbrain expressed at moderate levels, whereas in the other areas of the brainstem, namely medulla and pons, cerebellum and the hippocampus expressed at lower amounts when compared to the other brain regions (at protein level). Expressed in Langerhans cells and lymphocytes in the pancreas (at protein level). Expressed in kidney, in polarized renal epithelial cells. Expressed in adipose tissues. Expressed in placenta. Expressed in small intestine.

The protein resides in the basolateral cell membrane. It localises to the apical cell membrane. The protein localises to the cell membrane. The catalysed reaction is adenosine(in) = adenosine(out). The enzyme catalyses guanosine(in) = guanosine(out). It catalyses the reaction inosine(in) = inosine(out). It carries out the reaction uridine(out) = uridine(in). The catalysed reaction is thymidine(in) = thymidine(out). The enzyme catalyses cytidine(in) = cytidine(out). It catalyses the reaction adenine(out) = adenine(in). It carries out the reaction guanine(out) = guanine(in). The catalysed reaction is thymine(out) = thymine(in). The enzyme catalyses uracil(in) = uracil(out). It catalyses the reaction hypoxanthine(out) = hypoxanthine(in). Transporter activity is sensitive to low concentrations of the inhibitor nitrobenzylmercaptopurine riboside (NBMPR). Inhibited by dilazep. Inhibited by dipyridamole. Inhibited by hypoxanthine. Inhibited by azidothymidine (AZT). Inhibited by dideoxycytidine (ddC). Inhibited by dideoxyinosine (ddI). Inhibited by draflazine. Inhibited by soluflazine. Inhibited by cladribine. Inhibited by capecitabine. Inhibited by clofarabine. Inhibited by ribavirin. Modestly inhibited by acyclovir. Modestly inhibited by 5-fluorouracil. Uniporter involved in the facilitative transport of nucleosides and nucleobases, and contributes to maintaining their cellular homeostasis. Functions as a Na(+)-independent transporter. Involved in the transport of nucleosides such as adenosine, guanosine, inosine, uridine, thymidine and cytidine. Also transports purine nucleobases (hypoxanthine, adenine, guanine) and pyrimidine nucleobases (thymine, uracil). Mediates basolateral nucleoside uptake into Sertoli cells, thereby regulating the transport of nucleosides in testis across the blood-testis barrier. Regulates inosine levels in brown adipocytes tissues (BAT) and extracellular inosine levels, which controls BAT-dependent energy expenditure. The sequence is that of Equilibrative nucleoside transporter 1 from Homo sapiens (Human).